The chain runs to 252 residues: Chitooligosaccharide deacetylase (252 aa).

Positions 61 and 125 each coordinate Mg(2+).

Belongs to the YdjC deacetylase family. ChbG subfamily. Homodimer. Requires Mg(2+) as cofactor.

It localises to the cytoplasm. The enzyme catalyses N,N'-diacetylchitobiose + H2O = N-acetyl-beta-D-glucosaminyl-(1-&gt;4)-D-glucosamine + acetate. The catalysed reaction is diacetylchitobiose-6'-phosphate + H2O = N'-monoacetylchitobiose-6'-phosphate + acetate. It functions in the pathway glycan degradation; chitin degradation. Involved in the degradation of chitin. ChbG is essential for growth on the acetylated chitooligosaccharides chitobiose and chitotriose but is dispensable for growth on cellobiose and chitosan dimer, the deacetylated form of chitobiose. Deacetylation of chitobiose-6-P and chitotriose-6-P is necessary for both the activation of the chb promoter by the regulatory protein ChbR and the hydrolysis of phosphorylated beta-glucosides by the phospho-beta-glucosidase ChbF. Catalyzes the removal of only one acetyl group from chitobiose-6-P to yield monoacetylchitobiose-6-P, the inducer of ChbR and the substrate of ChbF. The chain is Chitooligosaccharide deacetylase from Salmonella heidelberg (strain SL476).